The primary structure comprises 764 residues: Nucleolar transcription factor 1 (764 aa).

Position 1 is an N-acetylmethionine (Met-1). Residues 1-21 (MNGEADCPTDLEMAAPKGQDR) are disordered. DNA-binding regions (HMG box) lie at residues 112–180 (PKKP…ARFR) and 196–264 (PEKP…RDYI). Residue Thr-201 is modified to Phosphothreonine. Ser-273, Ser-336, Ser-364, Ser-389, Ser-412, Ser-433, Ser-435, Ser-484, Ser-495, Ser-546, Ser-584, and Ser-638 each carry phosphoserine. Residues 298 to 362 (TKPPPNSYSL…DYEVELLRFL (65 aa)) constitute a DNA-binding region (HMG box 3). The interval 381–411 (NINKKQATSPASKKPAQEGGKGGSEKPKRPV) is disordered. DNA-binding regions (HMG box) lie at residues 407-475 (PKRP…GGER), 482-549 (PESP…SEMR), and 568-634 (KKPP…DLWV). Residues 459 to 487 (REAALKAQSERKPGGEREERGKLPESPKR) form a disordered region. The interval 546–576 (SEMRAPPAATNSSKKMKFQGEPKKPPMNGYQ) is disordered. The interval 648–764 (YISNKRKSMT…SGDSSDSDSN (117 aa)) is disordered. Residues 664 to 674 (PKSSRTTLQSK) show a composition bias toward polar residues. Over residues 677–745 (SEEDDEEDED…DDDEDEDNES (69 aa)) the composition is skewed to acidic residues. Low complexity predominate over residues 746–758 (EGSSSSSSSSGDS).

In terms of assembly, homodimer. Part of Pol I pre-initiation complex (PIC), in which Pol I core assembles with RRN3 and promoter-bound UTBF and SL1/TIF-IB complex. Interacts with TOP2A in the context of Pol I complex. Interacts with TBP. Interacts with TAF1A. Interacts with RASL11A. Binds to IRS1 and PIK3CA. Interacts with DHX33. Interacts with PHF6. Interacts with CEBPA (isoform 1 and isoform 4). Interacts with DDX11. Interacts with NOP53. Interacts with ALKBH2. Phosphorylated and activated by PIK3CA.

The protein localises to the nucleus. It localises to the nucleolus. In terms of biological role, recognizes the ribosomal RNA gene promoter and activates transcription mediated by RNA polymerase I (Pol I) through cooperative interactions with the transcription factor SL1/TIF-IB complex. It binds specifically to the upstream control element and can activate Pol I promoter escape. The chain is Nucleolar transcription factor 1 (UBTF) from Homo sapiens (Human).